The following is a 92-amino-acid chain: RNA-binding protein Hfq (92 aa).

The 62-residue stretch at 10–71 (DLFLNQLRKE…ISSIMPSKPI (62 aa)) folds into the Sm domain. Positions 73-92 (YMAQAQNNQQASQQSNNNQG) are disordered. A compositionally biased stretch (low complexity) spans 75–92 (AQAQNNQQASQQSNNNQG).

This sequence belongs to the Hfq family. As to quaternary structure, homohexamer.

RNA chaperone that binds small regulatory RNA (sRNAs) and mRNAs to facilitate mRNA translational regulation in response to envelope stress, environmental stress and changes in metabolite concentrations. Also binds with high specificity to tRNAs. The polypeptide is RNA-binding protein Hfq (Caldicellulosiruptor bescii (strain ATCC BAA-1888 / DSM 6725 / KCTC 15123 / Z-1320) (Anaerocellum thermophilum)).